The sequence spans 102 residues: Large ribosomal subunit protein bL21 (102 aa).

This sequence belongs to the bacterial ribosomal protein bL21 family. In terms of assembly, part of the 50S ribosomal subunit. Contacts protein L20.

This protein binds to 23S rRNA in the presence of protein L20. This is Large ribosomal subunit protein bL21 from Bacillus cytotoxicus (strain DSM 22905 / CIP 110041 / 391-98 / NVH 391-98).